Reading from the N-terminus, the 291-residue chain is 4-hydroxy-tetrahydrodipicolinate synthase (291 aa).

Residue Thr-45 coordinates pyruvate. Tyr-131 acts as the Proton donor/acceptor in catalysis. The Schiff-base intermediate with substrate role is filled by Lys-159. Ile-202 serves as a coordination point for pyruvate.

Belongs to the DapA family. In terms of assembly, homotetramer; dimer of dimers.

The protein localises to the cytoplasm. The enzyme catalyses L-aspartate 4-semialdehyde + pyruvate = (2S,4S)-4-hydroxy-2,3,4,5-tetrahydrodipicolinate + H2O + H(+). The protein operates within amino-acid biosynthesis; L-lysine biosynthesis via DAP pathway; (S)-tetrahydrodipicolinate from L-aspartate: step 3/4. In terms of biological role, catalyzes the condensation of (S)-aspartate-beta-semialdehyde [(S)-ASA] and pyruvate to 4-hydroxy-tetrahydrodipicolinate (HTPA). This chain is 4-hydroxy-tetrahydrodipicolinate synthase, found in Methanosarcina mazei (strain ATCC BAA-159 / DSM 3647 / Goe1 / Go1 / JCM 11833 / OCM 88) (Methanosarcina frisia).